A 682-amino-acid chain; its full sequence is TPR repeat-containing thioredoxin TTL4 (682 aa).

Disordered regions lie at residues M1 to L120 and N132 to I157. S8 bears the Phosphoserine mark. Basic and acidic residues predominate over residues K16–D39. S42 carries the phosphoserine modification. The segment covering G48–G71 has biased composition (low complexity). TPR repeat units lie at residues S211–N244, A246–Y278, R280–A312, A402–N435, V449–N482, S483–Y516, and K518–D550. The region spanning D587–E674 is the Thioredoxin domain.

Widely expressed.

In terms of biological role, involved in osmotic and salt stress tolerance. May play a role in the control of meristematic cell size during osmotic stress. The polypeptide is TPR repeat-containing thioredoxin TTL4 (TTL4) (Arabidopsis thaliana (Mouse-ear cress)).